The primary structure comprises 247 residues: RNA polymerase sigma factor FliA (247 aa).

The segment at 22–94 (LIQRYAPLVK…MLDEVRKGDW (73 aa)) is sigma-70 factor domain-2. The Interaction with polymerase core subunit RpoC motif lies at 49 to 52 (DLMQ). The sigma-70 factor domain-3 stretch occupies residues 102 to 171 (NTRMVTDAIR…GLPEDTSLSH (70 aa)). The segment at 190-238 (AIAKLPERERLVLALYYDEELNLKEIGEVLGVSESRVSQLHSQCAARLR) is sigma-70 factor domain-4. Positions 212-231 (LKEIGEVLGVSESRVSQLHS) form a DNA-binding region, H-T-H motif.

This sequence belongs to the sigma-70 factor family. FliA subfamily.

It is found in the cytoplasm. In terms of biological role, sigma factors are initiation factors that promote the attachment of RNA polymerase to specific initiation sites and are then released. This sigma factor controls the expression of flagella-related genes. Required for the flagellin gene (fliC) expression. The chain is RNA polymerase sigma factor FliA from Pseudomonas aeruginosa (strain ATCC 15692 / DSM 22644 / CIP 104116 / JCM 14847 / LMG 12228 / 1C / PRS 101 / PAO1).